A 352-amino-acid polypeptide reads, in one-letter code: C-C chemokine receptor type 5 (352 aa).

Topologically, residues 1 to 30 are extracellular; sequence MDYSMSTALYDIDYGMSEPCQKIDVKQVAA. Tyrosine 3 bears the Sulfotyrosine mark. Serine 6 carries an O-linked (GalNAc...) serine glycan. Sulfotyrosine is present on residues tyrosine 10 and tyrosine 14. O-linked (GalNAc...) serine glycosylation occurs at serine 17. 2 cysteine pairs are disulfide-bonded: cysteine 20–cysteine 269 and cysteine 101–cysteine 178. Residues 31–58 traverse the membrane as a helical segment; it reads RLLPPLYSLVFIFGFVGNLLVVLILITC. The Cytoplasmic segment spans residues 59 to 68; sequence KKLKSMTDIY. Residues 69–89 traverse the membrane as a helical segment; it reads LLNLAISDLLFLLTLPLWAHY. Residues 90 to 102 are Extracellular-facing; that stretch reads AAAEWDFGGAMCK. A helical membrane pass occupies residues 103 to 124; that stretch reads VFTGMYHMGYFGGIFFIILLTI. Residues 125-141 are Cytoplasmic-facing; the sequence is DRYLAIVHAVFALKART. A helical membrane pass occupies residues 142 to 166; sequence VTFGVVTSGVTWVAAILVSLPDIIF. Over 167–198 the chain is Extracellular; the sequence is TRSQKEGFRCSCSPHFPASQYQFWKNFHTIMR. A helical transmembrane segment spans residues 199–218; that stretch reads NILSLVLPLLVMIVCYSGIL. The Cytoplasmic segment spans residues 219 to 235; sequence KTLLRCRNEKRRHRAVR. A helical membrane pass occupies residues 236–260; sequence LIFAIMVVYFLFWAPYNVVLLLNTF. The Extracellular segment spans residues 261 to 277; it reads QEFFGLNNCSSSNRLDR. The helical transmembrane segment at 278–301 threads the bilayer; that stretch reads AMQVTETLGMTHCCINPVVYAFVG. At 302-352 the chain is on the cytoplasmic side; that stretch reads EKFRSYLSAFFRKHVAKRLCKHCPLLPRETPEPASSVYTRSTGEQEISVGL. 2 S-palmitoyl cysteine lipidation sites follow: cysteine 321 and cysteine 324. Positions 332–352 are disordered; that stretch reads PEPASSVYTRSTGEQEISVGL. 4 positions are modified to phosphoserine; by BARK1: serine 336, serine 337, serine 342, and serine 349. Positions 337–346 are enriched in polar residues; that stretch reads SVYTRSTGEQ.

This sequence belongs to the G-protein coupled receptor 1 family. In terms of assembly, interacts with PRAF2. Efficient ligand binding to CCL3/MIP-1alpha and CCL4/MIP-1beta requires sulfation, O-glycosylation and sialic acid modifications. Glycosylation on Ser-6 is required for efficient binding of CCL4. Interacts with GRK2. Interacts with ARRB1 and ARRB2. Interacts with CNIH4. Interacts with S100A4; this interaction stimulates T-lymphocyte chemotaxis. Post-translationally, sulfated on at least 2 of the N-terminal tyrosines. Sulfation is required for efficient binding of the chemokines, CCL3 and CCL4. In terms of processing, O-glycosylated, but not N-glycosylated. Ser-6 appears to be the major site. Also sialylated glycans present which contribute to chemokine binding. Ser-17 may also be glycosylated and, if so, with small moieties such as a T-antigen. Palmitoylation in the C-terminal is important for cell surface expression. Post-translationally, phosphorylation on serine residues in the C-terminal is stimulated by binding CC chemokines especially by APO-RANTES.

It is found in the cell membrane. In terms of biological role, receptor for a number of inflammatory CC-chemokines including CCL3/MIP-1-alpha, CCL4/MIP-1-beta and RANTES and subsequently transduces a signal by increasing the intracellular calcium ion level. May play a role in the control of granulocytic lineage proliferation or differentiation. Participates in T-lymphocyte migration to the infection site by acting as a chemotactic receptor. The protein is C-C chemokine receptor type 5 (CCR5) of Oryctolagus cuniculus (Rabbit).